The following is a 447-amino-acid chain: GTPase Der (447 aa).

EngA-type G domains lie at 3 to 167 (PVIA…VQER) and 181 to 354 (VKIA…AAAM). Residues 9–16 (GRPNVGKS), 56–60 (DTGGF), 119–122 (NKAE), 187–194 (GRPNVGKS), 234–238 (DTAGL), and 299–302 (NKWD) contribute to the GTP site. In terms of domain architecture, KH-like spans 355-439 (IKLPTPQITR…PLRIEFRTNK (85 aa)).

Belongs to the TRAFAC class TrmE-Era-EngA-EngB-Septin-like GTPase superfamily. EngA (Der) GTPase family. As to quaternary structure, associates with the 50S ribosomal subunit.

Its function is as follows. GTPase that plays an essential role in the late steps of ribosome biogenesis. The polypeptide is GTPase Der (Cupriavidus metallidurans (strain ATCC 43123 / DSM 2839 / NBRC 102507 / CH34) (Ralstonia metallidurans)).